Here is a 177-residue protein sequence, read N- to C-terminus: Isopentenyl-diphosphate Delta-isomerase (177 aa).

Mn(2+) contacts are provided by His-22 and His-28. A Nudix hydrolase domain is found at 26–160 (LRHMAISVFV…PERFTPWLRI (135 aa)). Cys-62 is an active-site residue. His-64 is a binding site for Mn(2+). Glu-82 serves as a coordination point for Mg(2+). 2 residues coordinate Mn(2+): Glu-108 and Glu-110. Glu-110 is an active-site residue.

This sequence belongs to the IPP isomerase type 1 family. Mg(2+) is required as a cofactor. Requires Mn(2+) as cofactor.

Its subcellular location is the cytoplasm. The catalysed reaction is isopentenyl diphosphate = dimethylallyl diphosphate. Its pathway is isoprenoid biosynthesis; dimethylallyl diphosphate biosynthesis; dimethylallyl diphosphate from isopentenyl diphosphate: step 1/1. It participates in porphyrin-containing compound metabolism; chlorophyll biosynthesis. Functionally, catalyzes the 1,3-allylic rearrangement of the homoallylic substrate isopentenyl (IPP) to its highly electrophilic allylic isomer, dimethylallyl diphosphate (DMAPP). This is Isopentenyl-diphosphate Delta-isomerase from Cereibacter sphaeroides (strain KD131 / KCTC 12085) (Rhodobacter sphaeroides).